Here is a 335-residue protein sequence, read N- to C-terminus: Lipase chaperone (335 aa).

A helical transmembrane segment spans residues 1-21 (MSGSILLLPLAIALGLGFFIA).

Belongs to the lipase chaperone family.

The protein localises to the cell inner membrane. Its function is as follows. May be involved in the folding of the extracellular lipase during its passage through the periplasm. The polypeptide is Lipase chaperone (Stutzerimonas stutzeri (strain A1501) (Pseudomonas stutzeri)).